The primary structure comprises 143 residues: Transcriptional regulator MraZ (143 aa).

2 consecutive SpoVT-AbrB domains span residues Glu5–Glu47 and Ala76–Lys119.

The protein belongs to the MraZ family. In terms of assembly, forms oligomers.

The protein resides in the cytoplasm. It is found in the nucleoid. This Natranaerobius thermophilus (strain ATCC BAA-1301 / DSM 18059 / JW/NM-WN-LF) protein is Transcriptional regulator MraZ.